A 363-amino-acid chain; its full sequence is Dihydroorotate dehydrogenase (quinone) (363 aa).

FMN-binding positions include 77–81 (AGMDK) and Thr-101. Substrate is bound at residue Lys-81. Substrate is bound at residue 126–130 (NRMGF). Residues Ser-155 and Asn-188 each contribute to the FMN site. Asn-188 provides a ligand contact to substrate. Ser-191 (nucleophile) is an active-site residue. Asn-193 is a binding site for substrate. FMN is bound by residues Lys-234 and Thr-262. 263–264 (NT) provides a ligand contact to substrate. FMN is bound by residues Gly-287, Gly-316, and 337 to 338 (YT).

The protein belongs to the dihydroorotate dehydrogenase family. Type 2 subfamily. In terms of assembly, monomer. FMN serves as cofactor.

It localises to the cell membrane. The catalysed reaction is (S)-dihydroorotate + a quinone = orotate + a quinol. It participates in pyrimidine metabolism; UMP biosynthesis via de novo pathway; orotate from (S)-dihydroorotate (quinone route): step 1/1. Catalyzes the conversion of dihydroorotate to orotate with quinone as electron acceptor. This Chloroflexus aurantiacus (strain ATCC 29366 / DSM 635 / J-10-fl) protein is Dihydroorotate dehydrogenase (quinone).